Here is a 3083-residue protein sequence, read N- to C-terminus: Genome polyprotein (3083 aa).

Residues 173–313 (IVCVDDVNNL…VLFYSDVEHY (141 aa)) form the Peptidase S30 domain. Catalysis depends on serine 267, which acts as the For P1 proteinase activity. The short motif at 365-368 (KLSC) is the Involved in interaction with stylet and aphid transmission element. The short motif at 621-623 (PTK) is the Involved in virions binding and aphid transmission element. The region spanning 647 to 769 (MYIAKEGYCY…QSEMKHYRVG (123 aa)) is the Peptidase C6 domain. Active-site for helper component proteinase activity residues include cysteine 655 and histidine 728. Residues 1239 to 1391 (EIASSSEGEF…TQFAVKVKTE (153 aa)) form the Helicase ATP-binding domain. An ATP-binding site is contributed by 1252–1259 (GAVGSGKS). Residues 1341–1344 (DECH) carry the DECH box motif. The region spanning 1410-1569 (DMVQHGNNIL…GLSVTTHGVS (160 aa)) is the Helicase C-terminal domain. A Nuclear localization signal motif is present at residues 1894 to 1903 (KRGKVKGNNS). Tyrosine 1918 bears the O-(5'-phospho-RNA)-tyrosine mark. Residues 2045-2263 (SKSIYKGVRD…IAWGSLNLVD (219 aa)) enclose the Peptidase C4 domain. Catalysis depends on for nuclear inclusion protein A activity residues histidine 2090, aspartate 2125, and cysteine 2195. The RdRp catalytic domain maps to 2529–2653 (WLYCHADGSQ…AVKDEDSGLL (125 aa)). The interval 2808 to 2855 (QTREAGAGASKKDKDEDKDKKKDVASSSASEKAVATATKDKDVNAGSH) is disordered. Positions 2817–2831 (SKKDKDEDKDKKKDV) are enriched in basic and acidic residues. The segment covering 2832 to 2844 (ASSSASEKAVATA) has biased composition (low complexity). Threonine 3065 bears the Phosphothreonine mark.

The protein belongs to the potyviridae genome polyprotein family. In terms of assembly, interacts with host eIF4E protein (via cap-binding region); this interaction mediates the translation of the VPg-viral RNA conjugates. Part of a complex that comprises VPg, RNA, host EIF4E and EIF4G; this interaction mediates the translation of the VPg-viral RNA conjugates. In terms of processing, VPg is uridylylated by the polymerase and is covalently attached to the 5'-end of the genomic RNA. This uridylylated form acts as a nucleotide-peptide primer for the polymerase. Post-translationally, potyviral RNA is expressed as two polyproteins which undergo post-translational proteolytic processing. Genome polyprotein is processed by NIa-pro, P1 and HC-pro proteinases resulting in the production of at least ten individual proteins. P3N-PIPO polyprotein is cleaved by P1 and HC-pro proteinases resulting in the production of three individual proteins. The P1 proteinase and the HC-pro cleave only their respective C-termini autocatalytically. 6K1 is essential for proper proteolytic separation of P3 from CI.

Its subcellular location is the host cytoplasmic vesicle. The protein localises to the host nucleus. It is found in the virion. It catalyses the reaction RNA(n) + a ribonucleoside 5'-triphosphate = RNA(n+1) + diphosphate. The catalysed reaction is Hydrolyzes glutaminyl bonds, and activity is further restricted by preferences for the amino acids in P6 - P1' that vary with the species of potyvirus, e.g. Glu-Xaa-Xaa-Tyr-Xaa-Gln-|-(Ser or Gly) for the enzyme from tobacco etch virus. The natural substrate is the viral polyprotein, but other proteins and oligopeptides containing the appropriate consensus sequence are also cleaved.. It carries out the reaction Hydrolyzes a Gly-|-Gly bond at its own C-terminus, commonly in the sequence -Tyr-Xaa-Val-Gly-|-Gly, in the processing of the potyviral polyprotein.. In terms of biological role, required for aphid transmission and also has proteolytic activity. Only cleaves a Gly-Gly dipeptide at its own C-terminus. Interacts with virions and aphid stylets. Acts as a suppressor of RNA-mediated gene silencing, also known as post-transcriptional gene silencing (PTGS), a mechanism of plant viral defense that limits the accumulation of viral RNAs. May have RNA-binding activity. Its function is as follows. Has helicase activity. It may be involved in replication. Functionally, indispensable for virus replication. Reduces the abundance of host transcripts related to jasmonic acid biosynthesis therefore altering the host defenses. In order to increase its own stability, decreases host protein degradation pathways. Indispensable for virus replication. In terms of biological role, mediates the cap-independent, EIF4E-dependent translation of viral genomic RNAs. Binds to the cap-binding site of host EIF4E and thus interferes with the host EIF4E-dependent mRNA export and translation. VPg-RNA directly binds EIF4E and is a template for transcription. Also forms trimeric complexes with EIF4E-EIF4G, which are templates for translation. Its function is as follows. Has RNA-binding and proteolytic activities. Functionally, an RNA-dependent RNA polymerase that plays an essential role in the virus replication. Involved in aphid transmission, cell-to-cell and systemis movement, encapsidation of the viral RNA and in the regulation of viral RNA amplification. The polypeptide is Genome polyprotein (Zucchini yellow mosaic virus (strain Singapore) (ZYMV)).